A 525-amino-acid chain; its full sequence is Zinc finger C2HC domain-containing protein 1C (525 aa).

Basic and acidic residues predominate over residues 23-34 (AHGLHSAKHDPY). Disordered regions lie at residues 23-48 (AHGLHSAKHDPYEQSDSPQRSSMGHL), 85-107 (CPHSAGISQQGSGNNAQGQGKGL), and 145-171 (VHRKSHSTSETGIDGDQNGYPRLPDSS). A compositionally biased stretch (polar residues) spans 36-48 (QSDSPQRSSMGHL). The span at 90–102 (GISQQGSGNNAQG) shows a compositional bias: low complexity. A coiled-coil region spans residues 207-252 (TQIQRLEAAGESLQKEIRRKEILLREKLKKTEEGLRRIQREKKQAI). Disordered regions lie at residues 292-316 (SRNRGEDQTCEQAQENSSPLQLSDY), 330-349 (NNKIRDRDSGPSAGTFSQPA), and 356-379 (LQASSLSGTPGSSGSSSSTEEQEL). A compositionally biased stretch (polar residues) spans 301-312 (CEQAQENSSPLQ). Residues 359 to 373 (SSLSGTPGSSGSSSS) show a composition bias toward low complexity. C2HC/C3H-type zinc fingers lie at residues 378–407 (ELGKCSHCGRSFLSLRLQRHSTVCGKMQGS) and 487–516 (DYVQCPHCSRHFAPKVAERHIPKCKTIKNR). C382, C385, H397, C401, C491, C494, H506, and C510 together coordinate Zn(2+).

This sequence belongs to the ZC2HC1 family. Requires Zn(2+) as cofactor.

The protein is Zinc finger C2HC domain-containing protein 1C (Zc2hc1c) of Rattus norvegicus (Rat).